Reading from the N-terminus, the 37-residue chain is Cytochrome b6-f complex subunit 7 (37 aa).

The helical transmembrane segment at 11 to 29 threads the bilayer; that stretch reads AVILMVLVLFGLAWGFLIL.

This sequence belongs to the PetM family. As to quaternary structure, the 4 large subunits of the cytochrome b6-f complex are cytochrome b6, subunit IV (17 kDa polypeptide, PetD), cytochrome f and the Rieske protein, while the 4 small subunits are PetG, PetL, PetM and PetN. The complex functions as a dimer.

Its subcellular location is the cellular thylakoid membrane. Its function is as follows. Component of the cytochrome b6-f complex, which mediates electron transfer between photosystem II (PSII) and photosystem I (PSI), cyclic electron flow around PSI, and state transitions. In Crocosphaera subtropica (strain ATCC 51142 / BH68) (Cyanothece sp. (strain ATCC 51142)), this protein is Cytochrome b6-f complex subunit 7.